The sequence spans 567 residues: Urease subunit alpha (567 aa).

Positions 129–567 (GGVDSHIHFI…LPLAQRYFLF (439 aa)) constitute a Urease domain. Residues His134, His136, and Lys217 each coordinate Ni(2+). Lys217 is modified (N6-carboxylysine). His219 provides a ligand contact to substrate. Positions 246 and 272 each coordinate Ni(2+). Residue His320 is the Proton donor of the active site. Asp360 is a binding site for Ni(2+).

This sequence belongs to the metallo-dependent hydrolases superfamily. Urease alpha subunit family. As to quaternary structure, heterotrimer of UreA (gamma), UreB (beta) and UreC (alpha) subunits. Three heterotrimers associate to form the active enzyme. Ni cation serves as cofactor. In terms of processing, carboxylation allows a single lysine to coordinate two nickel ions.

The protein resides in the cytoplasm. It carries out the reaction urea + 2 H2O + H(+) = hydrogencarbonate + 2 NH4(+). Its pathway is nitrogen metabolism; urea degradation; CO(2) and NH(3) from urea (urease route): step 1/1. This Pseudomonas putida (strain ATCC 700007 / DSM 6899 / JCM 31910 / BCRC 17059 / LMG 24140 / F1) protein is Urease subunit alpha.